Reading from the N-terminus, the 232-residue chain is Sugar fermentation stimulation protein homolog (232 aa).

This sequence belongs to the SfsA family.

The protein is Sugar fermentation stimulation protein homolog of Pyrobaculum arsenaticum (strain DSM 13514 / JCM 11321 / PZ6).